A 290-amino-acid polypeptide reads, in one-letter code: Programmed cell death 1 ligand 1 (290 aa).

Residues 1 to 18 (MRIFAVFIFMTYWHLLNA) form the signal peptide. The Ig-like V-type domain maps to 19 to 127 (FTVTVPKDLY…YGGADYKRIT (109 aa)). At 19 to 238 (FTVTVPKDLY…LPLAHPPNER (220 aa)) the chain is on the extracellular side. An N-linked (GlcNAc...) asparagine glycan is attached at asparagine 35. 2 cysteine pairs are disulfide-bonded: cysteine 40–cysteine 114 and cysteine 155–cysteine 209. Residues 133 to 225 (PYNKINQRIL…PEENHTAELV (93 aa)) form the Ig-like C2-type domain. N-linked (GlcNAc...) asparagine glycosylation is found at asparagine 192, asparagine 200, and asparagine 219. The chain crosses the membrane as a helical span at residues 239 to 259 (THLVILGAILLCLGVALTFIF). Residues 260–290 (RLRKGRMMDVKKCGIQDTNSKKQSDTHLEET) lie on the Cytoplasmic side of the membrane.

This sequence belongs to the immunoglobulin superfamily. BTN/MOG family. As to quaternary structure, interacts with PDCD1. Interacts (via transmembrane domain) with CMTM4 and CMTM6. Interacts with (phosphorylated) STAT3; promoting nuclear translocation. Interacts with CD80. May form homomultimers. In terms of processing, ubiquitinated; STUB1 likely mediates polyubiquitination of PD-L1/CD274 triggering its degradation. Ubiquitinated by MARCHF8; leading to degradation. Deubiquitinated by USP22; leading to stabilization. Highly expressed in the heart, skeletal muscle, placenta and lung. Weakly expressed in the thymus, spleen, kidney and liver. Expressed on activated T- and B-cells, dendritic cells, keratinocytes and monocytes. In terms of tissue distribution, widely expressed, highest in lung, liver and pituitary and in various peripheral blood cells, including neutrophils and some subtypes of lymphoid and myeloid cells.

Its subcellular location is the cell membrane. It localises to the early endosome membrane. The protein localises to the recycling endosome membrane. The protein resides in the nucleus. It is found in the endomembrane system. Its subcellular location is the secreted. Functionally, plays a critical role in induction and maintenance of immune tolerance to self. As a ligand for the inhibitory receptor PDCD1/PD-1, modulates the activation threshold of T-cells and limits T-cell effector response. Through a yet unknown activating receptor, may costimulate T-cell subsets that predominantly produce interleukin-10 (IL10). Can also act as a transcription coactivator: in response to hypoxia, translocates into the nucleus via its interaction with phosphorylated STAT3 and promotes transcription of GSDMC, leading to pyroptosis. The PDCD1-mediated inhibitory pathway is exploited by tumors to attenuate anti-tumor immunity and escape destruction by the immune system, thereby facilitating tumor survival. The interaction with PDCD1/PD-1 inhibits cytotoxic T lymphocytes (CTLs) effector function. The blockage of the PDCD1-mediated pathway results in the reversal of the exhausted T-cell phenotype and the normalization of the anti-tumor response, providing a rationale for cancer immunotherapy. This chain is Programmed cell death 1 ligand 1, found in Homo sapiens (Human).